Consider the following 443-residue polypeptide: Probable glycine dehydrogenase (decarboxylating) subunit 1 (443 aa).

Belongs to the GcvP family. N-terminal subunit subfamily. In terms of assembly, the glycine cleavage system is composed of four proteins: P, T, L and H. In this organism, the P 'protein' is a heterodimer of two subunits.

It catalyses the reaction N(6)-[(R)-lipoyl]-L-lysyl-[glycine-cleavage complex H protein] + glycine + H(+) = N(6)-[(R)-S(8)-aminomethyldihydrolipoyl]-L-lysyl-[glycine-cleavage complex H protein] + CO2. In terms of biological role, the glycine cleavage system catalyzes the degradation of glycine. The P protein binds the alpha-amino group of glycine through its pyridoxal phosphate cofactor; CO(2) is released and the remaining methylamine moiety is then transferred to the lipoamide cofactor of the H protein. This chain is Probable glycine dehydrogenase (decarboxylating) subunit 1, found in Nitratidesulfovibrio vulgaris (strain DP4) (Desulfovibrio vulgaris).